A 367-amino-acid chain; its full sequence is Ferrochelatase (367 aa).

Fe cation contacts are provided by histidine 213 and glutamate 294.

It belongs to the ferrochelatase family.

It localises to the cytoplasm. The catalysed reaction is heme b + 2 H(+) = protoporphyrin IX + Fe(2+). Its pathway is porphyrin-containing compound metabolism; protoheme biosynthesis; protoheme from protoporphyrin-IX: step 1/1. Its function is as follows. Catalyzes the ferrous insertion into protoporphyrin IX. This is Ferrochelatase from Dechloromonas aromatica (strain RCB).